A 249-amino-acid polypeptide reads, in one-letter code: Secreted flagellin C (249 aa).

As to quaternary structure, interacts with FliS.

The protein resides in the secreted. Its function is as follows. Might play a role in virulence. The protein is Secreted flagellin C (flaC) of Campylobacter jejuni subsp. jejuni serotype O:6 (strain 81116 / NCTC 11828).